We begin with the raw amino-acid sequence, 101 residues long: Omega-scoloptoxin(10)-Ssd1b (101 aa).

The first 23 residues, 1 to 23, serve as a signal peptide directing secretion; the sequence is MNKLTIIFFTILLLTYIIVEKEA.

Post-translationally, contains 3 disulfide bonds. Expressed by the venom gland.

Its subcellular location is the secreted. Voltage-gated calcium channel inhibitor. This chain is Omega-scoloptoxin(10)-Ssd1b, found in Scolopendra dehaani (Thai centipede).